The primary structure comprises 276 residues: Secreted LysM effector LysM10 (276 aa).

The N-terminal stretch at 1-22 is a signal peptide; the sequence is MLLSLVKFGILSVFLLAQEAVA. 3 N-linked (GlcNAc...) asparagine glycosylation sites follow: Asn-27, Asn-104, and Asn-140. The LysM domain occupies 219–264; sequence KTYIAKEDDTCKSISEAQSISTDRLVEVNHLDYSCSSLTSGTALCI. Asn-267 carries N-linked (GlcNAc...) asparagine glycosylation.

This sequence belongs to the secreted LysM effector family.

It is found in the secreted. Functionally, secreted LysM effector that might have a role in sequestration of chitin oligosaccharides (breakdown products of fungal cell walls that are released during invasion and act as triggers of host immunity) to dampen host defense. The protein is Secreted LysM effector LysM10 of Penicillium expansum (Blue mold rot fungus).